A 783-amino-acid polypeptide reads, in one-letter code: DNA polymerase II (783 aa).

It belongs to the DNA polymerase type-B family.

It catalyses the reaction DNA(n) + a 2'-deoxyribonucleoside 5'-triphosphate = DNA(n+1) + diphosphate. Its activity is regulated as follows. DNA polymerase II activity is regulated by the lexA gene during the SOS response. Thought to be involved in DNA repair and/or mutagenesis. Its processivity is enhanced by the beta sliding clamp (dnaN) and clamp loader. In Escherichia coli (strain K12), this protein is DNA polymerase II (polB).